A 695-amino-acid chain; its full sequence is NADPH--cytochrome P450 reductase (695 aa).

The Lumenal portion of the chain corresponds to Met-1 to Asp-8. The helical transmembrane segment at Leu-9–Val-31 threads the bilayer. Over Ala-32–Ser-695 the chain is Cytoplasmic. Positions Cys-66–Trp-221 constitute a Flavodoxin-like domain. Residues Ser-72–Ala-77, Ala-123–Gly-126, Leu-169–Asn-178, and Asp-204 contribute to the FMN site. The FAD-binding FR-type domain occupies His-277–Pro-538. Arg-296 provides a ligand contact to NADP(+). FAD contacts are provided by residues Arg-451–Ser-454, Thr-469–Val-471, and Gly-486–Thr-489. Residues Thr-552, Ser-614–Arg-615, Lys-620–Gln-624, and Glu-656 contribute to the NADP(+) site. Trp-694 contributes to the FAD binding site.

This sequence belongs to the NADPH--cytochrome P450 reductase family. In the N-terminal section; belongs to the flavodoxin family. The protein in the C-terminal section; belongs to the flavoprotein pyridine nucleotide cytochrome reductase family. It depends on FAD as a cofactor. FMN serves as cofactor.

It is found in the endoplasmic reticulum membrane. The protein resides in the mitochondrion outer membrane. The protein localises to the cell membrane. The catalysed reaction is 2 oxidized [cytochrome P450] + NADPH = 2 reduced [cytochrome P450] + NADP(+) + H(+). In terms of biological role, this enzyme is required for electron transfer from NADP to cytochrome P450 in microsomes. It can also provide electron transfer to heme oxygenase and cytochrome B5. Involved in ergosterol biosynthesis. This chain is NADPH--cytochrome P450 reductase, found in Aspergillus niger (strain ATCC MYA-4892 / CBS 513.88 / FGSC A1513).